Consider the following 301-residue polypeptide: MAAREMLYVNRETGKVEQERIICSSLVKFFIETRIGRALYSVLCKNSLFSRIVGWCQRLRVTRYFIKPFVTKYRICIEESASPLHDYASFNDFFVRKLKPDARPICQGEDICVTPADGAYLVFPSMADLSLFTIKNKPFSLESFLGDPQLAHQYAQGSMAIARLAPFDYHRFHFPIAGIAEAPRRINGHLFSIHPLMLKRNFEVFTENKREITIITSKEFGEVAYVEVGALNVGSIHQTFSPGSYVKKGAEKGFFAFGGSTVVLLFQPQRIIFDADLVGYSAQGLETRCRMGQSLGKRFSS.

Catalysis depends on charge relay system; for autoendoproteolytic cleavage activity residues aspartate 117, histidine 173, and serine 260. Residue serine 260 is the Schiff-base intermediate with substrate; via pyruvic acid; for decarboxylase activity of the active site. Pyruvic acid (Ser); by autocatalysis is present on serine 260.

It belongs to the phosphatidylserine decarboxylase family. PSD-B subfamily. Prokaryotic type II sub-subfamily. As to quaternary structure, heterodimer of a large membrane-associated beta subunit and a small pyruvoyl-containing alpha subunit. The cofactor is pyruvate. Post-translationally, is synthesized initially as an inactive proenzyme. Formation of the active enzyme involves a self-maturation process in which the active site pyruvoyl group is generated from an internal serine residue via an autocatalytic post-translational modification. Two non-identical subunits are generated from the proenzyme in this reaction, and the pyruvate is formed at the N-terminus of the alpha chain, which is derived from the carboxyl end of the proenzyme. The autoendoproteolytic cleavage occurs by a canonical serine protease mechanism, in which the side chain hydroxyl group of the serine supplies its oxygen atom to form the C-terminus of the beta chain, while the remainder of the serine residue undergoes an oxidative deamination to produce ammonia and the pyruvoyl prosthetic group on the alpha chain. During this reaction, the Ser that is part of the protease active site of the proenzyme becomes the pyruvoyl prosthetic group, which constitutes an essential element of the active site of the mature decarboxylase.

It localises to the cell membrane. The enzyme catalyses a 1,2-diacyl-sn-glycero-3-phospho-L-serine + H(+) = a 1,2-diacyl-sn-glycero-3-phosphoethanolamine + CO2. The protein operates within phospholipid metabolism; phosphatidylethanolamine biosynthesis; phosphatidylethanolamine from CDP-diacylglycerol: step 2/2. In terms of biological role, catalyzes the formation of phosphatidylethanolamine (PtdEtn) from phosphatidylserine (PtdSer). This Chlamydia trachomatis serovar L2 (strain ATCC VR-902B / DSM 19102 / 434/Bu) protein is Phosphatidylserine decarboxylase proenzyme.